Reading from the N-terminus, the 331-residue chain is Activator of 90 kDa heat shock protein ATPase homolog 2 (331 aa).

This sequence belongs to the AHA1 family.

Its function is as follows. Co-chaperone that stimulates HSP90 ATPase activity. The protein is Activator of 90 kDa heat shock protein ATPase homolog 2 (Ahsa2) of Mus musculus (Mouse).